Consider the following 459-residue polypeptide: Argininosuccinate lyase (459 aa).

This sequence belongs to the lyase 1 family. Argininosuccinate lyase subfamily.

It localises to the cytoplasm. The catalysed reaction is 2-(N(omega)-L-arginino)succinate = fumarate + L-arginine. It participates in amino-acid biosynthesis; L-arginine biosynthesis; L-arginine from L-ornithine and carbamoyl phosphate: step 3/3. The polypeptide is Argininosuccinate lyase (Staphylococcus aureus (strain USA300)).